The primary structure comprises 416 residues: NADH-quinone oxidoreductase subunit D (416 aa).

Belongs to the complex I 49 kDa subunit family. As to quaternary structure, NDH-1 is composed of 14 different subunits. Subunits NuoB, C, D, E, F, and G constitute the peripheral sector of the complex.

The protein localises to the cell inner membrane. It carries out the reaction a quinone + NADH + 5 H(+)(in) = a quinol + NAD(+) + 4 H(+)(out). Its function is as follows. NDH-1 shuttles electrons from NADH, via FMN and iron-sulfur (Fe-S) centers, to quinones in the respiratory chain. The immediate electron acceptor for the enzyme in this species is believed to be ubiquinone. Couples the redox reaction to proton translocation (for every two electrons transferred, four hydrogen ions are translocated across the cytoplasmic membrane), and thus conserves the redox energy in a proton gradient. This Caulobacter sp. (strain K31) protein is NADH-quinone oxidoreductase subunit D.